The primary structure comprises 232 residues: MTTSKIATAFKTATFALAAGAVALGLASPADAAAGTMYGDPAAAAKYWRQQTYDDCVLMSAADVIGQVTGREPSERAIIKVAQSTPSVVHPGSIYTKPADAEHPNSGMGTSVADIPTLLAHYGVDAVITDEDHATATGVATGMAALEQYLGSGHAVIVSINAEMIWGQPVEETDSAGNPRSDHAVVVTGVDTENGIVHLNDSGTPTGRDEQIPMETFVEAWATSHDFMAVTT.

The first 32 residues, 1–32 (MTTSKIATAFKTATFALAAGAVALGLASPADA), serve as a signal peptide directing secretion.

This is an uncharacterized protein from Mycobacterium bovis (strain ATCC BAA-935 / AF2122/97).